Here is a 75-residue protein sequence, read N- to C-terminus: MSTTEQTVCEIEQESELIPAKPQYIIVKKPKRQAWQRVLLLFRIINMIVIWAALIALFVKLYILRGPIPRSYFHY.

Residues 44–64 traverse the membrane as a helical segment; that stretch reads IINMIVIWAALIALFVKLYIL.

The protein localises to the host membrane. This is an uncharacterized protein from Ostreid herpesvirus 1 (isolate France) (OsHV-1).